The chain runs to 69 residues: Ribosome modulation factor (69 aa).

It belongs to the ribosome modulation factor family.

Its subcellular location is the cytoplasm. Its function is as follows. During stationary phase, converts 70S ribosomes to an inactive dimeric form (100S ribosomes). This chain is Ribosome modulation factor, found in Chromohalobacter salexigens (strain ATCC BAA-138 / DSM 3043 / CIP 106854 / NCIMB 13768 / 1H11).